Here is a 332-residue protein sequence, read N- to C-terminus: Thiamine thiazole synthase (332 aa).

Substrate contacts are provided by residues Cys-87, 108 to 109, Gly-116, and Val-184; that span reads EA. At Cys-221 the chain carries 2,3-didehydroalanine (Cys). Residues Asp-223, His-238, Met-290, and 300 to 302 contribute to the substrate site; that span reads RMG.

Belongs to the THI4 family. Homooctamer. Requires Fe cation as cofactor. Post-translationally, during the catalytic reaction, a sulfide is transferred from Cys-221 to a reaction intermediate, generating a dehydroalanine residue.

It localises to the cytoplasm. The protein localises to the nucleus. It carries out the reaction [ADP-thiazole synthase]-L-cysteine + glycine + NAD(+) = [ADP-thiazole synthase]-dehydroalanine + ADP-5-ethyl-4-methylthiazole-2-carboxylate + nicotinamide + 3 H2O + 2 H(+). In terms of biological role, involved in biosynthesis of the thiamine precursor thiazole. Catalyzes the conversion of NAD and glycine to adenosine diphosphate 5-(2-hydroxyethyl)-4-methylthiazole-2-carboxylic acid (ADT), an adenylated thiazole intermediate. The reaction includes an iron-dependent sulfide transfer from a conserved cysteine residue of the protein to a thiazole intermediate. The enzyme can only undergo a single turnover, which suggests it is a suicide enzyme. May have additional roles in adaptation to various stress conditions and in DNA damage tolerance. The chain is Thiamine thiazole synthase from Aspergillus fumigatus (strain ATCC MYA-4609 / CBS 101355 / FGSC A1100 / Af293) (Neosartorya fumigata).